Consider the following 104-residue polypeptide: Pyrimidine/purine nucleoside phosphorylase (104 aa).

Belongs to the nucleoside phosphorylase PpnP family.

It catalyses the reaction a purine D-ribonucleoside + phosphate = a purine nucleobase + alpha-D-ribose 1-phosphate. It carries out the reaction adenosine + phosphate = alpha-D-ribose 1-phosphate + adenine. The catalysed reaction is cytidine + phosphate = cytosine + alpha-D-ribose 1-phosphate. The enzyme catalyses guanosine + phosphate = alpha-D-ribose 1-phosphate + guanine. It catalyses the reaction inosine + phosphate = alpha-D-ribose 1-phosphate + hypoxanthine. It carries out the reaction thymidine + phosphate = 2-deoxy-alpha-D-ribose 1-phosphate + thymine. The catalysed reaction is uridine + phosphate = alpha-D-ribose 1-phosphate + uracil. The enzyme catalyses xanthosine + phosphate = alpha-D-ribose 1-phosphate + xanthine. Functionally, catalyzes the phosphorolysis of diverse nucleosides, yielding D-ribose 1-phosphate and the respective free bases. Can use uridine, adenosine, guanosine, cytidine, thymidine, inosine and xanthosine as substrates. Also catalyzes the reverse reactions. The polypeptide is Pyrimidine/purine nucleoside phosphorylase (Leptothrix cholodnii (strain ATCC 51168 / LMG 8142 / SP-6) (Leptothrix discophora (strain SP-6))).